Reading from the N-terminus, the 106-residue chain is Class II hydrophobin 6 (106 aa).

The N-terminal stretch at 1–16 (MQFFTVATLFLATAFA) is a signal peptide. Intrachain disulfides connect cysteine 36–cysteine 86, cysteine 47–cysteine 77, cysteine 48–cysteine 60, and cysteine 87–cysteine 98.

It belongs to the cerato-ulmin hydrophobin family. Homodimer. Homodimers further self-assemble to form highly ordered films at water-air interfaces through intermolecular interactions.

It localises to the secreted. It is found in the cell wall. Aerial growth, conidiation, and dispersal of filamentous fungi in the environment rely upon a capability of their secreting small amphipathic proteins called hydrophobins (HPBs) with low sequence identity. Class I can self-assemble into an outermost layer of rodlet bundles on aerial cell surfaces, conferring cellular hydrophobicity that supports fungal growth, development and dispersal; whereas Class II form highly ordered films at water-air interfaces through intermolecular interactions but contribute nothing to the rodlet structure. HFB2-6 is a class II hydrophobin that has a function in root colonization. Acts as an effector in poplar by up-regulating the expression of genes related to both the jasmonic acid and salicylic acid signal transduction pathways, which not only causes induced systemic resistance (ISR), but also systemic acquired resistance (SAR), giving poplar broad-spectrum resistance to pathogens. Also induces genes related to auxin signal transduction to promote poplar growth. Plays roles in interactions with both biotic and abiotic environmental conditions such as the presence of the pathogen Alternaria alternata or nutrient starvation conditions. The sequence is that of Class II hydrophobin 6 from Trichoderma asperellum (strain ATCC 204424 / CBS 433.97 / NBRC 101777).